Here is a 94-residue protein sequence, read N- to C-terminus: Large ribosomal subunit protein bL25 (94 aa).

This sequence belongs to the bacterial ribosomal protein bL25 family. As to quaternary structure, part of the 50S ribosomal subunit; part of the 5S rRNA/L5/L18/L25 subcomplex. Contacts the 5S rRNA. Binds to the 5S rRNA independently of L5 and L18.

Its function is as follows. This is one of the proteins that binds to the 5S RNA in the ribosome where it forms part of the central protuberance. This is Large ribosomal subunit protein bL25 from Escherichia coli O6:K15:H31 (strain 536 / UPEC).